The sequence spans 338 residues: Taste receptor type 2 member 39 (338 aa).

Over 1-30 the chain is Extracellular; it reads MLGRCFPPDTKEKQQLRMTKLCDPAESELS. The chain crosses the membrane as a helical span at residues 31–51; it reads PFLITLILAVLLAEYLIGIIA. Topologically, residues 52–74 are cytoplasmic; sequence NGFIMAIHAAEWVQNKAVSTSGR. A helical transmembrane segment spans residues 75-95; it reads ILVFLSVSRIALQSLMMLEIT. The Extracellular portion of the chain corresponds to 96–116; the sequence is ISSTSLSFYSEDAVYYAFKIS. Residues 117–137 form a helical membrane-spanning segment; that stretch reads FIFLNFCSLWFAAWLSFFYFV. The Cytoplasmic portion of the chain corresponds to 138-156; sequence KIANFSYPLFLKLRWRITG. A helical transmembrane segment spans residues 157 to 177; it reads LIPWLLWLSVFISFSHSMFCI. The Extracellular segment spans residues 178–205; sequence NIXTVYCNNSFPIHSSNSTKKTYLSEIN. Residues Asn-185 and Asn-194 are each glycosylated (N-linked (GlcNAc...) asparagine). Residues 206–226 form a helical membrane-spanning segment; sequence VVGLAFFFNLGIVTPLIMFIL. Residues 227–262 are Cytoplasmic-facing; the sequence is TATLLILSLKRHTLHMGSNATGSNDPSMEAHMGAIK. A helical transmembrane segment spans residues 263-283; sequence ATSYFLILYIFNAVALFIYLS. At 284-291 the chain is on the extracellular side; sequence NMFDINSL. Residues 292–312 traverse the membrane as a helical segment; the sequence is WNNLCQIIMAAYPASHSILLI. Residues 313–338 lie on the Cytoplasmic side of the membrane; that stretch reads QDNPGLRRAWKRLQLRLHLYPKEWTL.

The protein belongs to the G-protein coupled receptor T2R family.

It localises to the membrane. Functionally, receptor that may play a role in the perception of bitterness and is gustducin-linked. May play a role in sensing the chemical composition of the gastrointestinal content. The activity of this receptor may stimulate alpha gustducin, mediate PLC-beta-2 activation and lead to the gating of TRPM5. In Gorilla gorilla gorilla (Western lowland gorilla), this protein is Taste receptor type 2 member 39 (TAS2R39).